The chain runs to 373 residues: 3-dehydroquinate synthase (373 aa).

Residues 67–72 (EGEQAK), 101–105 (GVVLD), 125–126 (TT), lysine 138, and lysine 147 contribute to the NAD(+) site. Residues glutamate 180, histidine 240, and histidine 256 each coordinate Zn(2+).

It belongs to the sugar phosphate cyclases superfamily. Dehydroquinate synthase family. It depends on NAD(+) as a cofactor. Co(2+) serves as cofactor. The cofactor is Zn(2+).

The protein localises to the cytoplasm. The enzyme catalyses 7-phospho-2-dehydro-3-deoxy-D-arabino-heptonate = 3-dehydroquinate + phosphate. The protein operates within metabolic intermediate biosynthesis; chorismate biosynthesis; chorismate from D-erythrose 4-phosphate and phosphoenolpyruvate: step 2/7. Catalyzes the conversion of 3-deoxy-D-arabino-heptulosonate 7-phosphate (DAHP) to dehydroquinate (DHQ). This chain is 3-dehydroquinate synthase (aroB), found in Chlamydia muridarum (strain MoPn / Nigg).